The primary structure comprises 160 residues: Ribonuclease P protein component 2 (160 aa).

Belongs to the eukaryotic/archaeal RNase P protein component 2 family. In terms of assembly, consists of a catalytic RNA component and at least 4-5 protein subunits.

The protein resides in the cytoplasm. The enzyme catalyses Endonucleolytic cleavage of RNA, removing 5'-extranucleotides from tRNA precursor.. Its function is as follows. Part of ribonuclease P, a protein complex that generates mature tRNA molecules by cleaving their 5'-ends. The polypeptide is Ribonuclease P protein component 2 (Methanosphaerula palustris (strain ATCC BAA-1556 / DSM 19958 / E1-9c)).